Reading from the N-terminus, the 233-residue chain is Gamma-interferon-responsive lysosomal thiol protein (233 aa).

The N-terminal stretch at 1–26 is a signal peptide; the sequence is MVSSSLTKLVFFGCLLLLTFTDNLVA. C42 and C45 are disulfide-bonded. 2 N-linked (GlcNAc...) asparagine glycosylation sites follow: N80 and N207. The propeptide at 200–233 is removed in mature form; sequence TTLPKVCNSSASMSKSPERKWKLQVSYANKATNY.

The protein belongs to the GILT family. Dimer; disulfide-linked. Expressed in the outer integument of seed coat.

The protein localises to the secreted. It is found in the lysosome. Functionally, lysosomal thiol reductase that can reduce protein disulfide bonds. May facilitate the complete unfolding of proteins destined for lysosomal degradation. This chain is Gamma-interferon-responsive lysosomal thiol protein, found in Arabidopsis thaliana (Mouse-ear cress).